Consider the following 361-residue polypeptide: Peptide chain release factor 1 (361 aa).

Q238 is subject to N5-methylglutamine.

The protein belongs to the prokaryotic/mitochondrial release factor family. Post-translationally, methylated by PrmC. Methylation increases the termination efficiency of RF1.

It localises to the cytoplasm. In terms of biological role, peptide chain release factor 1 directs the termination of translation in response to the peptide chain termination codons UAG and UAA. In Mesomycoplasma hyopneumoniae (strain J / ATCC 25934 / NCTC 10110) (Mycoplasma hyopneumoniae), this protein is Peptide chain release factor 1.